Consider the following 221-residue polypeptide: Thiamine-phosphate synthase (221 aa).

4-amino-2-methyl-5-(diphosphooxymethyl)pyrimidine is bound by residues 44–48 and N79; that span reads QFREK. Mg(2+) contacts are provided by D80 and D99. Position 117 (S117) interacts with 4-amino-2-methyl-5-(diphosphooxymethyl)pyrimidine. 2-[(2R,5Z)-2-carboxy-4-methylthiazol-5(2H)-ylidene]ethyl phosphate is bound at residue 143–145; the sequence is TSS. K146 serves as a coordination point for 4-amino-2-methyl-5-(diphosphooxymethyl)pyrimidine. 2-[(2R,5Z)-2-carboxy-4-methylthiazol-5(2H)-ylidene]ethyl phosphate is bound by residues G175 and 195-196; that span reads IS.

This sequence belongs to the thiamine-phosphate synthase family. It depends on Mg(2+) as a cofactor.

It catalyses the reaction 2-[(2R,5Z)-2-carboxy-4-methylthiazol-5(2H)-ylidene]ethyl phosphate + 4-amino-2-methyl-5-(diphosphooxymethyl)pyrimidine + 2 H(+) = thiamine phosphate + CO2 + diphosphate. It carries out the reaction 2-(2-carboxy-4-methylthiazol-5-yl)ethyl phosphate + 4-amino-2-methyl-5-(diphosphooxymethyl)pyrimidine + 2 H(+) = thiamine phosphate + CO2 + diphosphate. The catalysed reaction is 4-methyl-5-(2-phosphooxyethyl)-thiazole + 4-amino-2-methyl-5-(diphosphooxymethyl)pyrimidine + H(+) = thiamine phosphate + diphosphate. The protein operates within cofactor biosynthesis; thiamine diphosphate biosynthesis; thiamine phosphate from 4-amino-2-methyl-5-diphosphomethylpyrimidine and 4-methyl-5-(2-phosphoethyl)-thiazole: step 1/1. Functionally, condenses 4-methyl-5-(beta-hydroxyethyl)thiazole monophosphate (THZ-P) and 2-methyl-4-amino-5-hydroxymethyl pyrimidine pyrophosphate (HMP-PP) to form thiamine monophosphate (TMP). The polypeptide is Thiamine-phosphate synthase (Geobacillus kaustophilus (strain HTA426)).